The sequence spans 198 residues: Nicotinamidase 3 (198 aa).

The protein belongs to the isochorismatase family.

The enzyme catalyses nicotinamide + H2O = nicotinate + NH4(+). The protein operates within cofactor biosynthesis; nicotinate biosynthesis; nicotinate from nicotinamide: step 1/1. Catalyzes the deamidation of nicotinamide, an early step in the NAD(+) salvage pathway. Prevents the accumulation of intracellular nicotinamide, a known inhibitor of poly(ADP-ribose) polymerases (PARP enzymes). The sequence is that of Nicotinamidase 3 from Arabidopsis thaliana (Mouse-ear cress).